Reading from the N-terminus, the 319-residue chain is ATP-dependent 6-phosphofructokinase (319 aa).

G11 is an ATP binding site. 21 to 25 (RAAVR) is a binding site for ADP. ATP contacts are provided by residues 72-73 (RS) and 102-105 (GDGS). Mg(2+) is bound at residue D103. Residue 125–127 (TID) coordinates substrate. The Proton acceptor role is filled by D127. R154 is an ADP binding site. Substrate is bound by residues R162 and 169–171 (MGR). Residues 185-187 (GAE), R211, and 213-215 (KKH) each bind ADP. Residues E222, R243, and 249 to 252 (HIQR) each bind substrate.

The protein belongs to the phosphofructokinase type A (PFKA) family. ATP-dependent PFK group I subfamily. Prokaryotic clade 'B1' sub-subfamily. As to quaternary structure, homotetramer. Mg(2+) is required as a cofactor.

The protein localises to the cytoplasm. The catalysed reaction is beta-D-fructose 6-phosphate + ATP = beta-D-fructose 1,6-bisphosphate + ADP + H(+). Its pathway is carbohydrate degradation; glycolysis; D-glyceraldehyde 3-phosphate and glycerone phosphate from D-glucose: step 3/4. With respect to regulation, allosterically activated by ADP and other diphosphonucleosides, and allosterically inhibited by phosphoenolpyruvate. Functionally, catalyzes the phosphorylation of D-fructose 6-phosphate to fructose 1,6-bisphosphate by ATP, the first committing step of glycolysis. The protein is ATP-dependent 6-phosphofructokinase of Brevibacillus brevis (strain 47 / JCM 6285 / NBRC 100599).